We begin with the raw amino-acid sequence, 103 residues long: UPF0145 protein Dred_2155 (103 aa).

This sequence belongs to the UPF0145 family.

This Desulforamulus reducens (strain ATCC BAA-1160 / DSM 100696 / MI-1) (Desulfotomaculum reducens) protein is UPF0145 protein Dred_2155.